Reading from the N-terminus, the 428-residue chain is Enolase (428 aa).

(2R)-2-phosphoglycerate is bound at residue Q163. E205 serves as the catalytic Proton donor. Mg(2+)-binding residues include D242, E285, and D312. (2R)-2-phosphoglycerate-binding residues include K337, R366, S367, and K388. K337 (proton acceptor) is an active-site residue.

Belongs to the enolase family. In terms of assembly, component of the RNA degradosome, a multiprotein complex involved in RNA processing and mRNA degradation. Requires Mg(2+) as cofactor.

The protein resides in the cytoplasm. Its subcellular location is the secreted. The protein localises to the cell surface. It catalyses the reaction (2R)-2-phosphoglycerate = phosphoenolpyruvate + H2O. The protein operates within carbohydrate degradation; glycolysis; pyruvate from D-glyceraldehyde 3-phosphate: step 4/5. Functionally, catalyzes the reversible conversion of 2-phosphoglycerate (2-PG) into phosphoenolpyruvate (PEP). It is essential for the degradation of carbohydrates via glycolysis. This is Enolase from Halorhodospira halophila (strain DSM 244 / SL1) (Ectothiorhodospira halophila (strain DSM 244 / SL1)).